Consider the following 62-residue polypeptide: Metallothionein-4 (62 aa).

The a divalent metal cation site is built by Cys-6, Cys-8, Cys-14, Cys-16, Cys-20, Cys-22, Cys-25, Cys-27, Cys-34, Cys-35, Cys-37, Cys-38, Cys-42, Cys-45, Cys-49, Cys-51, Cys-58, Cys-60, and Cys-61.

This sequence belongs to the metallothionein superfamily. Type 1 family.

In terms of biological role, seems to bind zinc and copper. Could play a special role in regulating zinc metabolism during the differentiation of stratified epithelia. In Homo sapiens (Human), this protein is Metallothionein-4 (MT4).